The chain runs to 349 residues: tRNA N6-adenosine threonylcarbamoyltransferase (349 aa).

H111 and H115 together coordinate Fe cation. Substrate is bound by residues 134–138, D167, G180, D184, and N279; that span reads LVSGG. D307 provides a ligand contact to Fe cation.

Belongs to the KAE1 / TsaD family. Fe(2+) serves as cofactor.

The protein resides in the cytoplasm. It carries out the reaction L-threonylcarbamoyladenylate + adenosine(37) in tRNA = N(6)-L-threonylcarbamoyladenosine(37) in tRNA + AMP + H(+). Required for the formation of a threonylcarbamoyl group on adenosine at position 37 (t(6)A37) in tRNAs that read codons beginning with adenine. Is involved in the transfer of the threonylcarbamoyl moiety of threonylcarbamoyl-AMP (TC-AMP) to the N6 group of A37, together with TsaE and TsaB. TsaD likely plays a direct catalytic role in this reaction. The sequence is that of tRNA N6-adenosine threonylcarbamoyltransferase from Nostoc punctiforme (strain ATCC 29133 / PCC 73102).